Consider the following 1062-residue polypeptide: Isoleucine--tRNA ligase (1062 aa).

Positions 47–57 (PYTTGHIHLGT) match the 'HIGH' region motif. A 'KMSKS' region motif is present at residues 591–595 (KMSKS). Lys-594 contacts ATP.

Belongs to the class-I aminoacyl-tRNA synthetase family. IleS type 2 subfamily. Monomer. The cofactor is Zn(2+).

Its subcellular location is the cytoplasm. The enzyme catalyses tRNA(Ile) + L-isoleucine + ATP = L-isoleucyl-tRNA(Ile) + AMP + diphosphate. Its function is as follows. Catalyzes the attachment of isoleucine to tRNA(Ile). As IleRS can inadvertently accommodate and process structurally similar amino acids such as valine, to avoid such errors it has two additional distinct tRNA(Ile)-dependent editing activities. One activity is designated as 'pretransfer' editing and involves the hydrolysis of activated Val-AMP. The other activity is designated 'posttransfer' editing and involves deacylation of mischarged Val-tRNA(Ile). The protein is Isoleucine--tRNA ligase of Methanospirillum hungatei JF-1 (strain ATCC 27890 / DSM 864 / NBRC 100397 / JF-1).